The primary structure comprises 268 residues: Undecaprenyl-diphosphatase (268 aa).

The next 8 helical transmembrane spans lie at 3-23, 46-66, 84-104, 107-127, 144-164, 184-204, 218-238, and 248-268; these read VFNLLEAAFLGLIEGLTEFIP, FEVLIQLGAILAILTVYSAKL, FGILVAFLPAAVIGALAHGFI, VLFETPMLVCIMLIIGGFILL, YPLPMCLAIGFIQCLAMIPGV, AAEFSFFLAMPTMAGAFAYDL, LIGVGFVMAFISGVFVVRYLL, and LFGWWRLIVGSVGLAALLVWG.

This sequence belongs to the UppP family.

The protein resides in the cell inner membrane. The enzyme catalyses di-trans,octa-cis-undecaprenyl diphosphate + H2O = di-trans,octa-cis-undecaprenyl phosphate + phosphate + H(+). Catalyzes the dephosphorylation of undecaprenyl diphosphate (UPP). Confers resistance to bacitracin. This Brucella anthropi (strain ATCC 49188 / DSM 6882 / CCUG 24695 / JCM 21032 / LMG 3331 / NBRC 15819 / NCTC 12168 / Alc 37) (Ochrobactrum anthropi) protein is Undecaprenyl-diphosphatase.